The primary structure comprises 683 residues: MTTAPVSAAERHAALEADLAQWDEAYHGRDEPEVSDAVYDAARRELLALEEAYPDLRSQEGASQRVGATPDSAFGKYRHLVPMLSLDNVFDPEGFDGFVSRVGRFLGLDEDGLQALQFVAEPKIDGLSISLTYEHGHFVRGTTRGDGIEGEDVTANLLTLKDIPRELPGEAPERVEIRGEVFLSKSSFLTLNEQQVARGAKPFANPRNAAAGSLRQLDAEITRSRPLSLFAYAQGYTSSPVATTHWDYLEKLRSWGFTVNPLSQMIAHARDIPAYVEKLARERSELDYDIDGIVFKLDDLSLQDRLGFAGRAPRWAIAWKFPAEQAITRLREIEIQVGRTGALTPVAHLEPVNVGGVIVSRATLHNEDEIARKDVRVGDLVRLQRAGDVIPQILGPVPSEEPRSEPFVYPDHCPVCGSLAERVHGEAVRRCTGGLTCEAQIVERLIHMVSRNAFDIDGLGERSIREFYDAGYIRRPGDIFRLRQHEEALLQRDGWGRLSVDNLFRAIEDRRTIPLSRLIFGLGIRRIGERNAQLLARHYQTFENWRTAMLAARPDSEERASLGAIMGVGDAIADELSAFFSESHNIETLDDLALELKDIIAEEAPSEGHLSGKVIVFTGTLTTMSRPEAKAIAERLGAQVTDSVSKKTSLVVLGEKAGSKAKKAAELGIETVDESGWRVLAGL.

Residues 36 to 40, 85 to 86, and E121 contribute to the NAD(+) site; these read DAVYD and SL. Catalysis depends on K123, which acts as the N6-AMP-lysine intermediate. NAD(+) contacts are provided by R144, E180, K296, and K320. Positions 413, 416, 431, and 437 each coordinate Zn(2+). The BRCT domain maps to 605-683; it reads PSEGHLSGKV…ESGWRVLAGL (79 aa).

The protein belongs to the NAD-dependent DNA ligase family. LigA subfamily. Mg(2+) serves as cofactor. Mn(2+) is required as a cofactor.

The enzyme catalyses NAD(+) + (deoxyribonucleotide)n-3'-hydroxyl + 5'-phospho-(deoxyribonucleotide)m = (deoxyribonucleotide)n+m + AMP + beta-nicotinamide D-nucleotide.. DNA ligase that catalyzes the formation of phosphodiester linkages between 5'-phosphoryl and 3'-hydroxyl groups in double-stranded DNA using NAD as a coenzyme and as the energy source for the reaction. It is essential for DNA replication and repair of damaged DNA. In Gluconobacter oxydans (strain 621H) (Gluconobacter suboxydans), this protein is DNA ligase.